The primary structure comprises 64 residues: Large ribosomal subunit protein bL28 (64 aa).

Positions M1 to K26 are disordered.

The protein belongs to the bacterial ribosomal protein bL28 family.

The protein is Large ribosomal subunit protein bL28 of Ureaplasma urealyticum serovar 10 (strain ATCC 33699 / Western).